Consider the following 118-residue polypeptide: Large ribosomal subunit protein bL19 (118 aa).

Belongs to the bacterial ribosomal protein bL19 family.

This protein is located at the 30S-50S ribosomal subunit interface and may play a role in the structure and function of the aminoacyl-tRNA binding site. This is Large ribosomal subunit protein bL19 from Campylobacter jejuni subsp. doylei (strain ATCC BAA-1458 / RM4099 / 269.97).